Reading from the N-terminus, the 201-residue chain is Peroxiredoxin prdx-2 (201 aa).

The region spanning 10-168 is the Thioredoxin domain; sequence AFIGKPAPQF…TLRLVQAFQF (159 aa). The Cysteine sulfenic acid (-SOH) intermediate role is filled by C55.

The protein belongs to the peroxiredoxin family. AhpC/Prx1 subfamily. In terms of assembly, monomer and homodimer; disulfide-linked. Under nonstress conditions, present in the reduced monomeric form. Forms active hyperoxidized monomers and disulfide-linked homodimers upon oxidation by hydrogen peroxide. Forms active oxidized homodimers in response to the drug metformin. The enzyme can be inactivated by further oxidation of the cysteine sulfenic acid (C(P)-SOH) to sulphinic acid (C(P)-SO2H) instead of its condensation to a disulfide bond. As to expression, expressed in the gonad, neurons and intestine (at protein level). Expressed in the pharyngeal inter-neuron I4 and the sensory interneuron I2. Expressed in the intestine, pharyngeal muscle 1, vulval muscle, body wall muscle, epithelial cells e1 and e3, and neurons in the head and tail.

It is found in the cytoplasm. The catalysed reaction is a hydroperoxide + [thioredoxin]-dithiol = an alcohol + [thioredoxin]-disulfide + H2O. Activated following oxidation of the conserved redox-active cysteine residue, which subsequently allows for the oxidation and activation of substrates. Functionally, thiol-specific peroxidase that catalyzes the reduction of hydrogen peroxide and organic hydroperoxides to water and alcohols, respectively. In I2 pharyngeal neurons, required for the inhibition of feeding in response to light and hydrogen peroxide. In the intestine, plays a role in protecting cells against oxidative stress by detoxifying peroxides such as hydrogen peroxide. In addition, plays a role in the recovery from oxidative stress induced by hydrogen peroxide. In its hyperoxidized form (induced by hydrogen peroxide), confers protection against heat stress. However, has a low tendency for overoxidation during the normal lifespan. Increases sensitivity to cytotoxicity caused by metalloids and heavy metals such as arsenic and cadmium by playing a role in inhibiting the expression of phase II detoxification genes such as gcs-1 in intestinal cells. In addition, in response to arsenite, promotes the secretion of the insulin ligand daf-28 into the pseudocoelom, which negatively regulates the activities of daf-16 and skn-1. Plays a role in promoting longevity. Plays a role in the mitohormetic pathway by promoting the activation of pmk-1 in response to the drug metformin. The sequence is that of Peroxiredoxin prdx-2 from Caenorhabditis elegans.